The following is a 1925-amino-acid chain: Methylcytosine dioxygenase tet3-A (1925 aa).

The segment at 62 to 103 adopts a CXXC-type zinc-finger fold; sequence SNKKRKRCGVCVPCLRKEPCGACYNCVNRSTSHQICKMRKCE. The Zn(2+) site is built by Cys-69, Cys-72, Cys-75, Cys-81, Cys-84, Cys-87, Cys-97, and Cys-102. Disordered regions lie at residues 457-476, 630-685, 774-812, and 833-892; these read KNALPVPQSPRQTSWEQNKK, KSQK…NAVF, GAKDSCPTPSTDDASSSSGQGDSANQHTNVGDVPGQNDL, and DFSL…PISH. Residues 465 to 476 show a composition bias toward polar residues; it reads SPRQTSWEQNKK. Basic residues predominate over residues 665 to 677; that stretch reads KPPRKQVQIKKPR. The span at 777-797 shows a compositional bias: low complexity; the sequence is DSCPTPSTDDASSSSGQGDSA. Polar residues-rich tracts occupy residues 841–856 and 883–892; these read APSQNGVGPPKQQISG and PALSNNPISH. Residues Cys-982, Cys-984, Cys-1042, His-1068, and Cys-1070 each coordinate Zn(2+). Arg-1110 contacts 2-oxoglutarate. Zn(2+)-binding residues include Cys-1120, Cys-1122, Cys-1138, Cys-1147, and Cys-1207. Cys-1223 is a 2-oxoglutarate binding site. His-1229 provides a ligand contact to Zn(2+). Positions 1231 and 1233 each coordinate Fe cation. Residue His-1265 participates in 2-oxoglutarate binding. Disordered stretches follow at residues 1307-1364, 1474-1513, 1556-1600, and 1722-1769; these read SEPA…QTKP, LADGMNQSYGSELPEQSYRRSSEVPHHYSLQNPNSQKSFN, SVHS…LPND, and NWAS…EEEI. Basic and acidic residues predominate over residues 1316-1347; it reads RQLDAKKAAAEKKKLQKEKLVSPDKTKQEPAD. Over residues 1350 to 1363 the composition is skewed to polar residues; that stretch reads MCQQNPGVPQQQTK. Positions 1490–1499 are enriched in basic and acidic residues; sequence SYRRSSEVPH. Polar residues-rich tracts occupy residues 1502–1513, 1556–1572, and 1730–1742; these read SLQNPNSQKSFN, SVHSQSPGVNHSLQTSD, and VGNSLKTESSQNH. His-1804 is a Fe cation binding site. Residue 1819–1821 participates in 2-oxoglutarate binding; sequence RIS. The stretch at 1837 to 1870 forms a coiled coil; the sequence is LALWEAKMKLLAERARVKEEEAARLGIKQEVKSL.

The protein belongs to the TET family. The cofactor is Fe(2+). Requires Zn(2+) as cofactor. Detected in embryo (at protein level). Detected in embryonic head, in developing brain, neural tube and eye.

The protein localises to the nucleus. Its subcellular location is the chromosome. The catalysed reaction is a 5-methyl-2'-deoxycytidine in DNA + 2-oxoglutarate + O2 = a 5-hydroxymethyl-2'-deoxycytidine in DNA + succinate + CO2. The enzyme catalyses a 5-hydroxymethyl-2'-deoxycytidine in DNA + 2-oxoglutarate + O2 = a 5-formyl-2'-deoxycytidine in DNA + succinate + CO2 + H2O. It carries out the reaction a 5-formyl-2'-deoxycytidine in DNA + 2-oxoglutarate + O2 = a 5-carboxyl-2'-deoxycytidine in DNA + succinate + CO2 + H(+). In terms of biological role, dioxygenase that catalyzes the conversion of the modified genomic base 5-methylcytosine (5mC) into 5-hydroxymethylcytosine (5hmC) and plays a key role in epigenetic chromatin reprogramming during embryonic development. Conversion of 5mC into 5hmC probably constitutes the first step in cytosine demethylation. Selectively binds to the promoter region of target genes and contributes to regulate the expression of numerous developmental genes, including pax6, rax, sox9 and six3. May also contribute to the regulation of target genes in ways that do not require its enzyme activity. In Xenopus laevis (African clawed frog), this protein is Methylcytosine dioxygenase tet3-A.